Reading from the N-terminus, the 392-residue chain is Nucleolysin TIAR (392 aa).

RRM domains follow at residues R9 to T102 and F114 to R192. Position 139 is an N6-acetyllysine (K139). S218 carries the phosphoserine modification. Residues C222–E294 form the RRM 3 domain. The disordered stretch occupies residues G363 to Q392. The segment covering G369 to N380 has biased composition (pro residues).

As to quaternary structure, interacts with FASTK. In terms of processing, phosphorylated by MAPK14 following DNA damage, releasing TIAR from GADD45A mRNA. As to expression, expressed both in primordial germ cells (PGCs) and in neighboring somatic cells.

It localises to the nucleus. The protein localises to the cytoplasm. Its subcellular location is the stress granule. The protein resides in the cytolytic granule. Its function is as follows. RNA-binding protein involved in alternative pre-RNA splicing and in cytoplasmic stress granules formation. Shows a preference for uridine-rich RNAs. Activates splicing of alternative exons with weak 5' splice sites followed by a U-rich stretch on its own pre-mRNA and on TIA1 mRNA. Promotes the inclusion of TIA1 exon 5 to give rise to the long isoform (isoform a) of TIA1. Acts downstream of the stress-induced phosphorylation of EIF2S1/EIF2A to promote the recruitment of untranslated mRNAs to cytoplasmic stress granules (SG). Possesses nucleolytic activity against cytotoxic lymphocyte target cells. May be involved in apoptosis. This Mus musculus (Mouse) protein is Nucleolysin TIAR (Tial1).